The sequence spans 69 residues: Cytochrome c oxidase subunit 8A, mitochondrial (69 aa).

The N-terminal 25 residues, 1–25 (MSVLTPLLLRGLTGSARRLPVPRAK), are a transit peptide targeting the mitochondrion. The SIFI-degron signature appears at 2 to 19 (SVLTPLLLRGLTGSARRL). At 26 to 36 (IHSLPPEEKLG) the chain is on the mitochondrial matrix side. A helical transmembrane segment spans residues 37 to 60 (IMELAVGLTSCFVTFLLPAGWILS). Residues 61 to 69 (HLETYRRPE) are Mitochondrial intermembrane-facing.

This sequence belongs to the cytochrome c oxidase VIII family. As to quaternary structure, component of the cytochrome c oxidase (complex IV, CIV), a multisubunit enzyme composed of 14 subunits. The complex is composed of a catalytic core of 3 subunits MT-CO1, MT-CO2 and MT-CO3, encoded in the mitochondrial DNA, and 11 supernumerary subunits COX4I, COX5A, COX5B, COX6A, COX6B, COX6C, COX7A, COX7B, COX7C, COX8 and NDUFA4, which are encoded in the nuclear genome. The complex exists as a monomer or a dimer and forms supercomplexes (SCs) in the inner mitochondrial membrane with NADH-ubiquinone oxidoreductase (complex I, CI) and ubiquinol-cytochrome c oxidoreductase (cytochrome b-c1 complex, complex III, CIII), resulting in different assemblies (supercomplex SCI(1)III(2)IV(1) and megacomplex MCI(2)III(2)IV(2)). In response to mitochondrial stress, the precursor protein is ubiquitinated by the SIFI complex in the cytoplasm before mitochondrial import, leading to its degradation. Within the SIFI complex, UBR4 initiates ubiquitin chain that are further elongated or branched by KCMF1.

The protein resides in the mitochondrion inner membrane. Its pathway is energy metabolism; oxidative phosphorylation. Functionally, component of the cytochrome c oxidase, the last enzyme in the mitochondrial electron transport chain which drives oxidative phosphorylation. The respiratory chain contains 3 multisubunit complexes succinate dehydrogenase (complex II, CII), ubiquinol-cytochrome c oxidoreductase (cytochrome b-c1 complex, complex III, CIII) and cytochrome c oxidase (complex IV, CIV), that cooperate to transfer electrons derived from NADH and succinate to molecular oxygen, creating an electrochemical gradient over the inner membrane that drives transmembrane transport and the ATP synthase. Cytochrome c oxidase is the component of the respiratory chain that catalyzes the reduction of oxygen to water. Electrons originating from reduced cytochrome c in the intermembrane space (IMS) are transferred via the dinuclear copper A center (CU(A)) of subunit 2 and heme A of subunit 1 to the active site in subunit 1, a binuclear center (BNC) formed by heme A3 and copper B (CU(B)). The BNC reduces molecular oxygen to 2 water molecules using 4 electrons from cytochrome c in the IMS and 4 protons from the mitochondrial matrix. This is Cytochrome c oxidase subunit 8A, mitochondrial (COX8A) from Hylobates agilis (Agile gibbon).